Here is a 446-residue protein sequence, read N- to C-terminus: D(1A) dopamine receptor (446 aa).

The Extracellular portion of the chain corresponds to 1–22 (MAPNTSTMDETGLPVERDFSFR). Asparagine 4 carries N-linked (GlcNAc...) asparagine glycosylation. Residues 23–48 (ILTACFLSLLILSTLLGNTLVCAAVI) traverse the membrane as a helical segment. Over 49–59 (RFRHLRSKVTN) the chain is Cytoplasmic. Residues 60–86 (FFVISLAVSDLLVAVLVMPWKAVAEIA) traverse the membrane as a helical segment. At 87-95 (GFWPFGSFC) the chain is on the extracellular side. Cysteine 95 and cysteine 186 are disulfide-bonded. The helical transmembrane segment at 96-118 (NIWVAFDIMCSTASILNLCVISV) threads the bilayer. Topologically, residues 119 to 137 (DRYWAISSPFQYERKMTPK) are cytoplasmic. The helical transmembrane segment at 138–162 (AAFILISVAWTLSVLISFIPVQLSW) threads the bilayer. Residues 163–192 (HKAKPTWPLDGNFTSLEDAEDDNCDTRLSR) are Extracellular-facing. A helical membrane pass occupies residues 193–218 (TYAISSSLISFYIPVAIMIVTYTSIY). The Cytoplasmic portion of the chain corresponds to 219–272 (RIAQKQIRRISALERAAVHAKNCQTTTGNGNPVECSQSESSFKMSFKRETKVLK). A helical membrane pass occupies residues 273–299 (TLSVIMGVFVCCWLPFFISNCMVPFCG). Over 300–312 (SEETQPFCIDSIT) the chain is Extracellular. The chain crosses the membrane as a helical span at residues 313-337 (FDVFVWFGWANSSLNPIIYAFNADF). The Cytoplasmic portion of the chain corresponds to 338–446 (QKAFSTLLGC…PVTHSGQHST (109 aa)). Residues cysteine 347 and cysteine 351 are each lipidated (S-palmitoyl cysteine). Serine 441 carries the phosphoserine modification.

It belongs to the G-protein coupled receptor 1 family. Interacts with DNAJC14 via its C-terminus. Interacts with DRD2. Interacts with DORIP1.

It is found in the cell membrane. Its subcellular location is the endoplasmic reticulum membrane. It localises to the cell projection. The protein resides in the cilium membrane. The protein localises to the dendrite. It is found in the dendritic spine. Functionally, dopamine receptor whose activity is mediated by G proteins which activate adenylyl cyclase. The polypeptide is D(1A) dopamine receptor (Drd1) (Mus musculus (Mouse)).